The chain runs to 224 residues: Urease accessory protein UreF (224 aa).

Belongs to the UreF family. UreD, UreF and UreG form a complex that acts as a GTP-hydrolysis-dependent molecular chaperone, activating the urease apoprotein by helping to assemble the nickel containing metallocenter of UreC. The UreE protein probably delivers the nickel.

It localises to the cytoplasm. Its function is as follows. Required for maturation of urease via the functional incorporation of the urease nickel metallocenter. This is Urease accessory protein UreF from Enterobacter sp. (strain 638).